We begin with the raw amino-acid sequence, 414 residues long: Peptide chain release factor subunit 1 (414 aa).

This sequence belongs to the eukaryotic release factor 1 family. As to quaternary structure, heterodimer of two subunits, one of which binds GTP.

It localises to the cytoplasm. Functionally, directs the termination of nascent peptide synthesis (translation) in response to the termination codons UAA, UAG and UGA. The chain is Peptide chain release factor subunit 1 (prf1) from Pyrococcus abyssi (strain GE5 / Orsay).